Here is a 195-residue protein sequence, read N- to C-terminus: Holliday junction branch migration complex subunit RuvA (195 aa).

The domain I stretch occupies residues 1–63 (MIASVRGEVI…EDSMTLYGFV (63 aa)). The domain II stretch occupies residues 64 to 142 (DGDARDLFLT…PVSAGGGAAV (79 aa)). The interval 143–150 (GGHAIRGP) is flexible linker. The segment at 150–195 (PVVEALVGLGFAAKQAEEATDKVLANDPEATTSSALRAALSMLGKK) is domain III.

It belongs to the RuvA family. In terms of assembly, homotetramer. Forms an RuvA(8)-RuvB(12)-Holliday junction (HJ) complex. HJ DNA is sandwiched between 2 RuvA tetramers; dsDNA enters through RuvA and exits via RuvB. An RuvB hexamer assembles on each DNA strand where it exits the tetramer. Each RuvB hexamer is contacted by two RuvA subunits (via domain III) on 2 adjacent RuvB subunits; this complex drives branch migration. In the full resolvosome a probable DNA-RuvA(4)-RuvB(12)-RuvC(2) complex forms which resolves the HJ.

It is found in the cytoplasm. Its function is as follows. The RuvA-RuvB-RuvC complex processes Holliday junction (HJ) DNA during genetic recombination and DNA repair, while the RuvA-RuvB complex plays an important role in the rescue of blocked DNA replication forks via replication fork reversal (RFR). RuvA specifically binds to HJ cruciform DNA, conferring on it an open structure. The RuvB hexamer acts as an ATP-dependent pump, pulling dsDNA into and through the RuvAB complex. HJ branch migration allows RuvC to scan DNA until it finds its consensus sequence, where it cleaves and resolves the cruciform DNA. The protein is Holliday junction branch migration complex subunit RuvA of Mycolicibacterium smegmatis (strain ATCC 700084 / mc(2)155) (Mycobacterium smegmatis).